We begin with the raw amino-acid sequence, 381 residues long: GDP-mannose transporter (381 aa).

Topologically, residues 1 to 44 (MAEGKKTDDYTIQMDSIDQGNKSFEAPPPPQPRSPPSGSLSNNP) are cytoplasmic. Residues 19-41 (QGNKSFEAPPPPQPRSPPSGSLS) are disordered. Positions 26-35 (APPPPQPRSP) are enriched in pro residues. A helical transmembrane segment spans residues 45-65 (ILPVLAYCGSSILMTVMNKYV). At 66–70 (LSGTD) the chain is on the lumenal side. The helical transmembrane segment at 71-91 (FNLNFFLLCIQSLVCIIAIQT) threads the bilayer. Residues 92-109 (CKSCGLITYRDFSADEAR) are Cytoplasmic-facing. Residues 110–126 (KWFPITLLLIGMIYTGS) traverse the membrane as a helical segment. The Lumenal segment spans residues 127–133 (KALQFLS). Residues 134–150 (IPVYTIFKNLTIILIAY) traverse the membrane as a helical segment. At 151-159 (GEVLWFGGS) the chain is on the cytoplasmic side. The helical transmembrane segment at 160–181 (VTGLTLFSFGLMVLSSIIAAWA) threads the bilayer. Residues 182–199 (DIKHAVESNGDATAKVST) are Lumenal-facing. The chain crosses the membrane as a helical span at residues 200-220 (LNAGYIWMLVNCLCTSSYVLG). Over 221 to 234 (MRKRIKLTNFKDFD) the chain is Cytoplasmic. Residues 235-255 (TMFYNNLLSIPVLIVLSAFLE) form a helical membrane-spanning segment. Residues 256-273 (DWSSTNVNRNFPPMDRNS) lie on the Lumenal side of the membrane. A helical membrane pass occupies residues 274-294 (IVFAMILSGLSSVFISYTSAW). At 295-302 (CVRVTSST) the chain is on the cytoplasmic side. The helical transmembrane segment at 303-323 (TYSMVGALNKLPIAISGLIFF) threads the bilayer. Residues 324–326 (DAP) lie on the Lumenal side of the membrane. Residues 327–347 (VTFPSVSAIVVGFVSGIVYAV) traverse the membrane as a helical segment. The Cytoplasmic segment spans residues 348-381 (AKIKQNAKPRTGVLPTANPPVSASSQSMRDSLRS). Residues 358-381 (TGVLPTANPPVSASSQSMRDSLRS) form a disordered region. Over residues 366–381 (PPVSASSQSMRDSLRS) the composition is skewed to polar residues.

It belongs to the TPT transporter family. SLC35D subfamily. As to quaternary structure, homooligomer.

Its subcellular location is the golgi apparatus membrane. The protein localises to the cytoplasmic vesicle membrane. It localises to the endoplasmic reticulum membrane. Its function is as follows. Involved in the import of GDP-mannose from the cytoplasm into the Golgi lumen. The protein is GDP-mannose transporter (gmt1) of Aspergillus niger (strain ATCC MYA-4892 / CBS 513.88 / FGSC A1513).